The following is a 317-amino-acid chain: Ribosomal large subunit pseudouridine synthase D (317 aa).

The S4 RNA-binding domain maps to Trp15–Glu89. Asp141 is a catalytic residue.

It belongs to the pseudouridine synthase RluA family.

Its subcellular location is the cytoplasm. It carries out the reaction uridine(1911/1915/1917) in 23S rRNA = pseudouridine(1911/1915/1917) in 23S rRNA. Its function is as follows. Responsible for synthesis of pseudouridine from uracil at positions 1911, 1915 and 1917 in 23S ribosomal RNA. This is Ribosomal large subunit pseudouridine synthase D from Zymomonas mobilis subsp. mobilis (strain ATCC 31821 / ZM4 / CP4).